Consider the following 322-residue polypeptide: tRNA U34 carboxymethyltransferase (322 aa).

Residues K91, W105, K110, G129, 179-180, M195, Y199, and R314 contribute to the carboxy-S-adenosyl-L-methionine site; that span reads LE.

The protein belongs to the class I-like SAM-binding methyltransferase superfamily. CmoB family. As to quaternary structure, homotetramer.

The enzyme catalyses carboxy-S-adenosyl-L-methionine + 5-hydroxyuridine(34) in tRNA = 5-carboxymethoxyuridine(34) in tRNA + S-adenosyl-L-homocysteine + H(+). In terms of biological role, catalyzes carboxymethyl transfer from carboxy-S-adenosyl-L-methionine (Cx-SAM) to 5-hydroxyuridine (ho5U) to form 5-carboxymethoxyuridine (cmo5U) at position 34 in tRNAs. The chain is tRNA U34 carboxymethyltransferase from Pseudomonas paraeruginosa (strain DSM 24068 / PA7) (Pseudomonas aeruginosa (strain PA7)).